Here is a 526-residue protein sequence, read N- to C-terminus: Cytochrome P450 monooxygenase 253 (526 aa).

3 consecutive transmembrane segments (helical) span residues 13–33 (IASSTIGQRILLALALGLLLI), 115–135 (FIMAGEILTGGMLIVFTGYGK), and 306–326 (IGAGAETTAASLSVFMLAMTL). C451 lines the heme pocket.

Belongs to the cytochrome P450 family. Heme is required as a cofactor.

The protein localises to the membrane. It functions in the pathway secondary metabolite biosynthesis. Cytochrome P450 monooxygenase that is able to use delta(6)-protoilludene as a substrate to produce delta(6)-protoilludene-8-ol. The sequence is that of Cytochrome P450 monooxygenase 253 from Postia placenta (strain ATCC 44394 / Madison 698-R) (Brown rot fungus).